Consider the following 513-residue polypeptide: Histidine ammonia-lyase (513 aa).

The segment at residues alanine 145–glycine 147 is a cross-link (5-imidazolinone (Ala-Gly)). Serine 146 carries the post-translational modification 2,3-didehydroalanine (Ser).

Belongs to the PAL/histidase family. In terms of processing, contains an active site 4-methylidene-imidazol-5-one (MIO), which is formed autocatalytically by cyclization and dehydration of residues Ala-Ser-Gly.

It localises to the cytoplasm. The enzyme catalyses L-histidine = trans-urocanate + NH4(+). Its pathway is amino-acid degradation; L-histidine degradation into L-glutamate; N-formimidoyl-L-glutamate from L-histidine: step 1/3. This is Histidine ammonia-lyase from Vibrio vulnificus (strain YJ016).